The primary structure comprises 666 residues: tRNA 5-methylaminomethyl-2-thiouridine biosynthesis bifunctional protein MnmC (666 aa).

The segment at methionine 1 to glutamate 245 is tRNA (mnm(5)s(2)U34)-methyltransferase. The interval isoleucine 270 to lysine 666 is FAD-dependent cmnm(5)s(2)U34 oxidoreductase.

It in the N-terminal section; belongs to the methyltransferase superfamily. tRNA (mnm(5)s(2)U34)-methyltransferase family. This sequence in the C-terminal section; belongs to the DAO family. It depends on FAD as a cofactor.

Its subcellular location is the cytoplasm. The enzyme catalyses 5-aminomethyl-2-thiouridine(34) in tRNA + S-adenosyl-L-methionine = 5-methylaminomethyl-2-thiouridine(34) in tRNA + S-adenosyl-L-homocysteine + H(+). Its function is as follows. Catalyzes the last two steps in the biosynthesis of 5-methylaminomethyl-2-thiouridine (mnm(5)s(2)U) at the wobble position (U34) in tRNA. Catalyzes the FAD-dependent demodification of cmnm(5)s(2)U34 to nm(5)s(2)U34, followed by the transfer of a methyl group from S-adenosyl-L-methionine to nm(5)s(2)U34, to form mnm(5)s(2)U34. The chain is tRNA 5-methylaminomethyl-2-thiouridine biosynthesis bifunctional protein MnmC from Salmonella typhi.